The chain runs to 89 residues: Large ribosomal subunit protein bL27 (89 aa).

The segment at 1–21 (MAHKKSGGSSSNGRDSESKRL) is disordered.

Belongs to the bacterial ribosomal protein bL27 family.

The sequence is that of Large ribosomal subunit protein bL27 from Caulobacter vibrioides (strain NA1000 / CB15N) (Caulobacter crescentus).